The primary structure comprises 140 residues: Alkaline proteinase inhibitor (140 aa).

The first 25 residues, 1–25 (MPSSVQATAGLLATLMMFCGEVAMA), serve as a signal peptide directing secretion.

This sequence belongs to the protease inhibitor I38 family.

Its subcellular location is the periplasm. Its function is as follows. Inhibitor of the alkaline protease. This chain is Alkaline proteinase inhibitor (inh), found in Pseudomonas brassicacearum (strain NFM421).